A 340-amino-acid polypeptide reads, in one-letter code: Immunoglobulin-binding protein 1 family member C (340 aa).

Disordered regions lie at residues 223 to 243 and 292 to 340; these read KDSS…PPMK and PEEF…QNMG. The segment covering 303-314 has biased composition (acidic residues); the sequence is EDQEKEEEDDEQ. Basic and acidic residues predominate over residues 318-330; that stretch reads RAREWDDWKDTHP.

The protein belongs to the IGBP1/TAP42 family.

The sequence is that of Immunoglobulin-binding protein 1 family member C from Homo sapiens (Human).